Here is a 509-residue protein sequence, read N- to C-terminus: ATP synthase subunit alpha (509 aa).

171-178 (GDRKTGKT) is a binding site for ATP.

The protein belongs to the ATPase alpha/beta chains family. As to quaternary structure, F-type ATPases have 2 components, CF(1) - the catalytic core - and CF(0) - the membrane proton channel. CF(1) has five subunits: alpha(3), beta(3), gamma(1), delta(1), epsilon(1). CF(0) has three main subunits: a(1), b(2) and c(9-12). The alpha and beta chains form an alternating ring which encloses part of the gamma chain. CF(1) is attached to CF(0) by a central stalk formed by the gamma and epsilon chains, while a peripheral stalk is formed by the delta and b chains.

The protein localises to the cell inner membrane. It catalyses the reaction ATP + H2O + 4 H(+)(in) = ADP + phosphate + 5 H(+)(out). Its function is as follows. Produces ATP from ADP in the presence of a proton gradient across the membrane. The alpha chain is a regulatory subunit. In Ehrlichia chaffeensis (strain ATCC CRL-10679 / Arkansas), this protein is ATP synthase subunit alpha.